The chain runs to 309 residues: Verprolin (309 aa).

Residues 1 to 13 (MAPAPPPPPPAPA) show a composition bias toward pro residues. A disordered region spans residues 1–273 (MAPAPPPPPP…PNRVDDHGRF (273 aa)). The WH2 domain maps to 27-44 (DRSALLNSIQKGKKLKKA). Over residues 82–91 (LPTSSNNTQQ) the composition is skewed to polar residues. The span at 141–207 (TSAPPRPSIP…PPKVPPPPLS (67 aa)) shows a compositional bias: pro residues.

Belongs to the verprolin family. As to quaternary structure, interacts with wsp1. Interacts with myo1 (via SH3 domain). Interacts with actin monomers.

It is found in the cytoplasm. The protein resides in the cytoskeleton. Functionally, involved in cytoskeletal organization and cellular growth. May exert its effects on the cytoskeleton directly, or indirectly via proline-binding proteins such as profilin or proteins possessing SH3 domains. Plays a role in actin patch assembly by enhancing the ability of myo1 to stimulate actin polymerization by the Arp2/3 complex. In Schizosaccharomyces pombe (strain 972 / ATCC 24843) (Fission yeast), this protein is Verprolin.